The chain runs to 271 residues: Insulin-like growth factor-binding protein 5 (271 aa).

A signal peptide spans 1-19 (MVLTAVLLLLAACAGPAQG). The region spanning 22 to 102 (SFVHCEPCDE…LHGRGVCLNE (81 aa)) is the IGFBP N-terminal domain. 6 cysteine pairs are disulfide-bonded: Cys-26/Cys-52, Cys-29/Cys-54, Cys-37/Cys-55, Cys-44/Cys-58, Cys-66/Cys-79, and Cys-73/Cys-99. The span at 109–121 (AKIERDSREHEEP) shows a compositional bias: basic and acidic residues. The segment at 109–129 (AKIERDSREHEEPTTSEMAEE) is disordered. Phosphoserine is present on Ser-115. The region spanning 188–262 (QGPCRRHMEA…MEYVDGDFQC (75 aa)) is the Thyroglobulin type-1 domain. 3 disulfides stabilise this stretch: Cys-191/Cys-218, Cys-229/Cys-240, and Cys-242/Cys-262.

In terms of assembly, interacts with IGF1; this interaction enhances the growth stimulatory effects of IGF1 on fibroblasts. Interacts with CAV1; this interaction allows trafficking of IGFBP5 from the plasma membrane to the nucleus. Interacts with NCL; this interaction is necessary for IGFBP5 localization to the nucleus.

The protein localises to the secreted. It is found in the cytoplasm. The protein resides in the nucleus. Functionally, multifunctional protein that plays a critical role in regulating the availability of IGFs to their receptors and thereby regulates IGF-mediated cellular processes including proliferation, differentiation, and apoptosis in a cell-type specific manner. Increases the cell proliferation of osteoblasts, intestinal smooth muscle cells and neuroblastoma cells. Enhances adhesion and survival of epithelial cells but decreases adhesion of mesenchymal cells. Once secreted, acts as a major mediator of mTORC1-dependent feedback inhibition of IGF1 signaling. Also plays a role in the induction of extracellular matrix (ECM) production and deposition independently of its nuclear translocation and binding to IGFs. Acts itself as a growth factor that can act independently of IGFs to regulate bone formation. Acts as a ligand for the ROR1 receptor which triggers formation of ROR1/HER2 heterodimer to enhance CREB oncogenic signaling. This Sus scrofa (Pig) protein is Insulin-like growth factor-binding protein 5 (IGFBP5).